A 52-amino-acid polypeptide reads, in one-letter code: Conotoxin Cal9.2d (52 aa).

The propeptide occupies 1-6 (KRGVTL). 3 cysteine pairs are disulfide-bonded: Cys-14-Cys-31, Cys-19-Cys-41, and Cys-21-Cys-46.

In terms of tissue distribution, expressed by the venom duct.

The protein localises to the secreted. Functionally, probable neurotoxin with unknown target. Possibly targets ion channels. The protein is Conotoxin Cal9.2d of Californiconus californicus (California cone).